A 215-amino-acid chain; its full sequence is Octanoyltransferase (215 aa).

Residues 42-215 (QNTPDEIWLL…AEKLKARLKQ (174 aa)) enclose the BPL/LPL catalytic domain. Substrate contacts are provided by residues 81–88 (RGGQITYH), 148–150 (ALG), and 161–163 (GLA). C179 functions as the Acyl-thioester intermediate in the catalytic mechanism.

Belongs to the LipB family.

The protein resides in the cytoplasm. The enzyme catalyses octanoyl-[ACP] + L-lysyl-[protein] = N(6)-octanoyl-L-lysyl-[protein] + holo-[ACP] + H(+). It participates in protein modification; protein lipoylation via endogenous pathway; protein N(6)-(lipoyl)lysine from octanoyl-[acyl-carrier-protein]: step 1/2. Its function is as follows. Catalyzes the transfer of endogenously produced octanoic acid from octanoyl-acyl-carrier-protein onto the lipoyl domains of lipoate-dependent enzymes. Lipoyl-ACP can also act as a substrate although octanoyl-ACP is likely to be the physiological substrate. This chain is Octanoyltransferase, found in Nitrosospira multiformis (strain ATCC 25196 / NCIMB 11849 / C 71).